Here is a 131-residue protein sequence, read N- to C-terminus: D-ribose pyranase (131 aa).

His-20 acts as the Proton donor in catalysis. Substrate contacts are provided by residues Asp-28, His-98, and 120 to 122 (YCN).

This sequence belongs to the RbsD / FucU family. RbsD subfamily. As to quaternary structure, homodecamer.

It is found in the cytoplasm. The enzyme catalyses beta-D-ribopyranose = beta-D-ribofuranose. Its pathway is carbohydrate metabolism; D-ribose degradation; D-ribose 5-phosphate from beta-D-ribopyranose: step 1/2. Functionally, catalyzes the interconversion of beta-pyran and beta-furan forms of D-ribose. The protein is D-ribose pyranase of Coprothermobacter proteolyticus (strain ATCC 35245 / DSM 5265 / OCM 4 / BT).